The primary structure comprises 654 residues: Endoplasmic reticulum chaperone BiP (654 aa).

Positions 1-18 (MKFTVVAAALLLLCAVRA) are cleaved as a signal peptide. The tract at residues 1–80 (MKFTVVAAAL…EGERLIGDAA (80 aa)) is required for interaction with ELAPOR1. Residue 36–39 (GTTY) coordinates ATP. S86 is subject to Phosphoserine. K96 is a binding site for ATP. The residue at position 125 (K125) is an N6-acetyllysine. The interval 125–280 (KPYIQVDIGG…KKKTGKDVRK (156 aa)) is nucleotide-binding (NBD). Y160 carries the post-translational modification 3'-nitrotyrosine. Position 213 is an N6-acetyllysine (K213). Position 227-229 (227-229 (GGT)) interacts with ATP. K271 bears the N6-acetyllysine mark. 293-300 (EKAKRALS) is an ATP binding site. Residue K326 is modified to N6-acetyllysine. A Glycyl lysine isopeptide (Lys-Gly) (interchain with G-Cter in SUMO2) cross-link involves residue K352. At K353 the chain carries N6-acetyllysine; alternate. K353 participates in a covalent cross-link: Glycyl lysine isopeptide (Lys-Gly) (interchain with G-Cter in SUMO1); alternate. 364–367 (GSTR) provides a ligand contact to ATP. The interval 409 to 419 (QDTGDLVLLDV) is interdomain linker. Residues 420–500 (CPLTLGIETV…PRGVPQIEVT (81 aa)) are substrate-binding (SBD). Residue K447 is modified to N6-succinyllysine. R492 carries the post-translational modification Omega-N-methylarginine. T518 is modified (O-AMP-threonine; alternate). T518 carries the phosphothreonine; alternate modification. Position 585 is an N6,N6,N6-trimethyllysine; by METTL21A; in vitro (K585). Residue K585 is modified to N6,N6-dimethyllysine; alternate. K585 is subject to N6-methyllysine; alternate. K591 is subject to N6-methyllysine. The segment at 631–654 (ISKLYGSGGPPPTGEEDTSEKDEL) is disordered. Residues T643 and T648 each carry the phosphothreonine modification. Over residues 644–654 (GEEDTSEKDEL) the composition is skewed to acidic residues. The residue at position 649 (S649) is a Phosphoserine. A Prevents secretion from ER motif is present at residues 651–654 (KDEL).

The protein belongs to the heat shock protein 70 family. In terms of assembly, monomer and homooligomer; homooligomerization via the interdomain linker inactivates the chaperone activity and acts as a storage of HSPA5/BiP molecules. Interacts with DNAJC1 (via J domain). Component of an EIF2 complex at least composed of CELF1/CUGBP1, CALR, CALR3, EIF2S1, EIF2S2, HSP90B1 and HSPA5. Part of a large chaperone multiprotein complex comprising DNAJB11, HSP90B1, HSPA5, HYOU, PDIA2, PDIA4, PDIA6, PPIB, SDF2L1, UGGT1 and very small amounts of ERP29, but not, or at very low levels, CALR nor CANX. Interacts with TMEM132A and TRIM21. May form a complex with ERLEC1, OS9, SEL1L and SYVN1. Interacts with DNAJC10. Interacts with DNAJB9/ERdj4; leading to recruit HSPA5/BiP to ERN1/IRE1. Interacts with ERN1/IRE1 (via luminal domain); the interaction takes place following interaction with DNAJB9/ERdj4 and leads to inactivate ERN1/IRE1, the interaction also competitively inhibits ERN1 interaction with MANF. Interacts directly with MANF (via SAP domain); the interaction inhibits ATP binding to HSPA5/BiP and subsequent nucleotide exchange. Interacts with EIF2AK3/PERK (via luminal domain); interaction leads to inactivate EIF2AK3/PERK. Interacts with MX1. Interacts with METTL23. Interacts with CEMIP; the interaction induces calcium leakage from the endoplasmic reticulum and cell migration. Interacts with PCSK4 form; the interaction takes place in the endoplasmic reticulum. Interacts with CIPC. Interacts with CCDC88B (via C-terminus); the interaction opposes ERN1-mediated JNK activation, protecting against apoptosis. Interacts with INPP5K; necessary for INPP5K localization at the endoplasmic reticulum. Interacts with MANF; the interaction is direct. Interacts with LOXL2; leading to activate the ERN1/IRE1-XBP1 pathway of the unfolded protein response. Interacts with CLU under stressed condition; interaction increases CLU protein stability; facilitates its retrotranslocation and redistribution to the mitochondria; cooperatively suppress stress-induced apoptosis by stabilizing mitochondrial membrane integrity. Interacts with CCDC47. Interacts with CLN3. Interacts with ELAPOR1; may regulate the function of HSPA5 in apoptosis and cell proliferation. Interacts with CASP7. Interacts with ILDR2; the interaction stabilizes ILDR2 expression. Interacts with ADAM7. In unstressed cells, AMPylation at Thr-518 by FICD inactivates the chaperome activity: AMPylated form is locked in a relatively inert state and only weakly stimulated by J domain-containing proteins. In response to endoplasmic reticulum stress, de-AMPylation by the same protein, FICD, restores the chaperone activity.

It localises to the endoplasmic reticulum lumen. Its subcellular location is the melanosome. The protein localises to the cytoplasm. The protein resides in the cell surface. The enzyme catalyses ATP + H2O = ADP + phosphate + H(+). The chaperone activity is regulated by ATP-induced allosteric coupling of the nucleotide-binding (NBD) and substrate-binding (SBD) domains. In the ADP-bound and nucleotide-free (apo) states, the two domains have little interaction. In contrast, in the ATP-bound state the two domains are tightly coupled, which results in drastically accelerated kinetics in both binding and release of polypeptide substrates. J domain-containing co-chaperones (DNAJB9/ERdj4 or DNAJC10/ERdj5) stimulate the ATPase activity and are required for efficient substrate recognition by HSPA5/BiP. Homooligomerization inactivates participating HSPA5/BiP protomers and probably act as reservoirs to store HSPA5/BiP molecules when they are not needed by the cell. In terms of biological role, endoplasmic reticulum chaperone that plays a key role in protein folding and quality control in the endoplasmic reticulum lumen. Involved in the correct folding of proteins and degradation of misfolded proteins via its interaction with DNAJC10/ERdj5, probably to facilitate the release of DNAJC10/ERdj5 from its substrate. Acts as a key repressor of the EIF2AK3/PERK and ERN1/IRE1-mediated unfolded protein response (UPR). In the unstressed endoplasmic reticulum, recruited by DNAJB9/ERdj4 to the luminal region of ERN1/IRE1, leading to disrupt the dimerization of ERN1/IRE1, thereby inactivating ERN1/IRE1. Also binds and inactivates EIF2AK3/PERK in unstressed cells. Accumulation of misfolded protein in the endoplasmic reticulum causes release of HSPA5/BiP from ERN1/IRE1 and EIF2AK3/PERK, allowing their homodimerization and subsequent activation. Plays an auxiliary role in post-translational transport of small presecretory proteins across endoplasmic reticulum (ER). May function as an allosteric modulator for SEC61 channel-forming translocon complex, likely cooperating with SEC62 to enable the productive insertion of these precursors into SEC61 channel. Appears to specifically regulate translocation of precursors having inhibitory residues in their mature region that weaken channel gating. May also play a role in apoptosis and cell proliferation. This Rattus norvegicus (Rat) protein is Endoplasmic reticulum chaperone BiP.